The primary structure comprises 231 residues: Phosphoribosylformylglycinamidine synthase subunit PurQ (231 aa).

A Glutamine amidotransferase type-1 domain is found at Gly-7–Leu-231. Cys-89 (nucleophile) is an active-site residue. Catalysis depends on residues His-206 and Glu-208.

Part of the FGAM synthase complex composed of 1 PurL, 1 PurQ and 2 PurS subunits.

The protein resides in the cytoplasm. The catalysed reaction is N(2)-formyl-N(1)-(5-phospho-beta-D-ribosyl)glycinamide + L-glutamine + ATP + H2O = 2-formamido-N(1)-(5-O-phospho-beta-D-ribosyl)acetamidine + L-glutamate + ADP + phosphate + H(+). The enzyme catalyses L-glutamine + H2O = L-glutamate + NH4(+). It participates in purine metabolism; IMP biosynthesis via de novo pathway; 5-amino-1-(5-phospho-D-ribosyl)imidazole from N(2)-formyl-N(1)-(5-phospho-D-ribosyl)glycinamide: step 1/2. Part of the phosphoribosylformylglycinamidine synthase complex involved in the purines biosynthetic pathway. Catalyzes the ATP-dependent conversion of formylglycinamide ribonucleotide (FGAR) and glutamine to yield formylglycinamidine ribonucleotide (FGAM) and glutamate. The FGAM synthase complex is composed of three subunits. PurQ produces an ammonia molecule by converting glutamine to glutamate. PurL transfers the ammonia molecule to FGAR to form FGAM in an ATP-dependent manner. PurS interacts with PurQ and PurL and is thought to assist in the transfer of the ammonia molecule from PurQ to PurL. This Chlorobium luteolum (strain DSM 273 / BCRC 81028 / 2530) (Pelodictyon luteolum) protein is Phosphoribosylformylglycinamidine synthase subunit PurQ.